We begin with the raw amino-acid sequence, 376 residues long: MSYTIFSKKKNNQLKEPMFFGQPVNIARYDQQKYKIFEQLIEKQLSFFWRPEEIDLSRDRIDFQNLPDNEKHIFISNLKYQTLLDSIQGRSPNIAFLPIISIPELETWIETWSFSETIHSRSYTHIIRNIVNCPSLVFDDIISNKNIYDRAQNISIYYDELINLTSYWHLLGEGIHLINGKKIHINLRFLKKRLYLCLISVNVLEAIRFYVSFACSFAFAERELMEGNAKIIRLIARDEALHLTGTQHILNLLSNIKNNENMEDVVLECKEEAINIFISAAQQEKKWASYLFKSGSMLGLNKDILCQYIEYITNIRMHAIGFKMPFKKQSNPIPWINDWLTSDNIQIAPQETEISSYLVGQIDSEVSDNEFKKFEL.

Positions 85, 116, and 119 each coordinate Fe cation. Tyr-123 is an active-site residue. Fe cation contacts are provided by Glu-205, Glu-239, and His-242.

It belongs to the ribonucleoside diphosphate reductase small chain family. As to quaternary structure, tetramer of two alpha and two beta subunits. Fe cation serves as cofactor.

It carries out the reaction a 2'-deoxyribonucleoside 5'-diphosphate + [thioredoxin]-disulfide + H2O = a ribonucleoside 5'-diphosphate + [thioredoxin]-dithiol. Its function is as follows. Provides the precursors necessary for DNA synthesis. Catalyzes the biosynthesis of deoxyribonucleotides from the corresponding ribonucleotides. This chain is Ribonucleoside-diphosphate reductase subunit beta (nrdB), found in Buchnera aphidicola subsp. Acyrthosiphon pisum (strain APS) (Acyrthosiphon pisum symbiotic bacterium).